Consider the following 485-residue polypeptide: Ribulose bisphosphate carboxylase large chain (485 aa).

Residues asparagine 124 and threonine 174 each contribute to the substrate site. The Proton acceptor role is filled by lysine 176. Lysine 178 is a binding site for substrate. Mg(2+) is bound by residues lysine 202, aspartate 204, and glutamate 205. Lysine 202 carries the N6-carboxylysine modification. The Proton acceptor role is filled by histidine 294. The substrate site is built by arginine 295, histidine 327, and serine 379.

The protein belongs to the RuBisCO large chain family. Type I subfamily. In terms of assembly, heterohexadecamer of 8 large chains and 8 small chains. Mg(2+) serves as cofactor.

It carries out the reaction 2 (2R)-3-phosphoglycerate + 2 H(+) = D-ribulose 1,5-bisphosphate + CO2 + H2O. The enzyme catalyses D-ribulose 1,5-bisphosphate + O2 = 2-phosphoglycolate + (2R)-3-phosphoglycerate + 2 H(+). Its function is as follows. RuBisCO catalyzes two reactions: the carboxylation of D-ribulose 1,5-bisphosphate, the primary event in carbon dioxide fixation, as well as the oxidative fragmentation of the pentose substrate in the photorespiration process. Both reactions occur simultaneously and in competition at the same active site. This Rhodopseudomonas palustris (strain BisB18) protein is Ribulose bisphosphate carboxylase large chain.